Consider the following 243-residue polypeptide: Small ribosomal subunit protein uS3 (243 aa).

Residues 39 to 110 form the KH type-2 domain; the sequence is IRVFIQKKYG…QVRINVVEIE (72 aa). Residues 216–243 are disordered; it reads QPLPVGASPRRKGNRRPQQFEDRSNDGK. The span at 233–243 shows a compositional bias: basic and acidic residues; sequence QQFEDRSNDGK.

This sequence belongs to the universal ribosomal protein uS3 family. In terms of assembly, part of the 30S ribosomal subunit. Forms a tight complex with proteins S10 and S14.

Functionally, binds the lower part of the 30S subunit head. Binds mRNA in the 70S ribosome, positioning it for translation. The sequence is that of Small ribosomal subunit protein uS3 from Prochlorococcus marinus (strain SARG / CCMP1375 / SS120).